Here is a 586-residue protein sequence, read N- to C-terminus: Pyruvate kinase (586 aa).

Arg32 serves as a coordination point for substrate. 4 residues coordinate K(+): Asn34, Ser36, Asp66, and Thr67. Position 34–37 (34–37 (NFSH)) interacts with ATP. ATP contacts are provided by Arg73 and Lys156. Position 222 (Glu222) interacts with Mg(2+). Substrate-binding residues include Gly245, Asp246, and Thr278. Asp246 contacts Mg(2+).

The protein belongs to the pyruvate kinase family. This sequence in the C-terminal section; belongs to the PEP-utilizing enzyme family. It depends on Mg(2+) as a cofactor. Requires K(+) as cofactor.

The catalysed reaction is pyruvate + ATP = phosphoenolpyruvate + ADP + H(+). It participates in carbohydrate degradation; glycolysis; pyruvate from D-glyceraldehyde 3-phosphate: step 5/5. This is Pyruvate kinase (pyk) from Staphylococcus saprophyticus subsp. saprophyticus (strain ATCC 15305 / DSM 20229 / NCIMB 8711 / NCTC 7292 / S-41).